A 79-amino-acid chain; its full sequence is Cyclin-dependent kinases regulatory subunit 1 (79 aa).

Ser-2 carries the post-translational modification N-acetylserine.

This sequence belongs to the CKS family. In terms of assembly, forms a homohexamer that can probably bind six kinase subunits.

Functionally, binds to the catalytic subunit of the cyclin dependent kinases and is essential for their biological function. In Bos taurus (Bovine), this protein is Cyclin-dependent kinases regulatory subunit 1 (CKS1B).